Here is an 836-residue protein sequence, read N- to C-terminus: Homeobox-leucine zipper protein ATHB-15 (836 aa).

Positions 14–77 form a DNA-binding region, homeobox; sequence DNGKYVRYTP…NRRCREKQRK (64 aa). A coiled-coil region spans residues 72-115; the sequence is REKQRKEASRLQAVNRKLTAMNKLLMEENDRLQKQVSQLVHENS. The START domain occupies 151–379; the sequence is RDASPAGLLS…IAQEVTQTNS (229 aa).

The protein belongs to the HD-ZIP homeobox family. Class III subfamily. As to quaternary structure, interacts with ESR1 and ESR2. Interacts with ZPR3. In terms of tissue distribution, highly expressed the developing vascular elements and the adaxial portion of cotyledons. Expressed in developing ovules, stamens and carpels. Expressed in procambium and shoot meristem.

The protein localises to the nucleus. Probable transcription factor involved in the regulation of meristem development to promote lateral organ formation. May regulates procambial and vascular tissue formation or maintenance, and vascular development in inflorescence stems. This Arabidopsis thaliana (Mouse-ear cress) protein is Homeobox-leucine zipper protein ATHB-15 (ATHB-15).